Here is a 97-residue protein sequence, read N- to C-terminus: Aspartyl/glutamyl-tRNA(Asn/Gln) amidotransferase subunit C (97 aa).

It belongs to the GatC family. As to quaternary structure, heterotrimer of A, B and C subunits.

The enzyme catalyses L-glutamyl-tRNA(Gln) + L-glutamine + ATP + H2O = L-glutaminyl-tRNA(Gln) + L-glutamate + ADP + phosphate + H(+). It carries out the reaction L-aspartyl-tRNA(Asn) + L-glutamine + ATP + H2O = L-asparaginyl-tRNA(Asn) + L-glutamate + ADP + phosphate + 2 H(+). Allows the formation of correctly charged Asn-tRNA(Asn) or Gln-tRNA(Gln) through the transamidation of misacylated Asp-tRNA(Asn) or Glu-tRNA(Gln) in organisms which lack either or both of asparaginyl-tRNA or glutaminyl-tRNA synthetases. The reaction takes place in the presence of glutamine and ATP through an activated phospho-Asp-tRNA(Asn) or phospho-Glu-tRNA(Gln). This is Aspartyl/glutamyl-tRNA(Asn/Gln) amidotransferase subunit C from Prochlorococcus marinus (strain SARG / CCMP1375 / SS120).